The following is a 165-amino-acid chain: MPANSRSARLTHLDDAGLPTMVDVSDKAVTARSATAESRVRFPAAVAAQLRANGLRSAKGGIVETAVIAGTMAVKRTHELIPFCHPLPIDACRFGIDWAGEQVLDIRCTVRCVHRTGVEMEALTGASVAALTIYDMCKALSHSMSIGPTKLVSKRGGKRDIGAAQ.

Substrate contacts are provided by residues 83–85 (FCH) and 120–121 (ME). Residue aspartate 135 is part of the active site.

The protein belongs to the MoaC family. Homohexamer; trimer of dimers.

The catalysed reaction is (8S)-3',8-cyclo-7,8-dihydroguanosine 5'-triphosphate = cyclic pyranopterin phosphate + diphosphate. The protein operates within cofactor biosynthesis; molybdopterin biosynthesis. Its function is as follows. Catalyzes the conversion of (8S)-3',8-cyclo-7,8-dihydroguanosine 5'-triphosphate to cyclic pyranopterin monophosphate (cPMP). The polypeptide is Cyclic pyranopterin monophosphate synthase (Xanthomonas axonopodis pv. citri (strain 306)).